We begin with the raw amino-acid sequence, 307 residues long: 2-carboxy-1,4-naphthoquinone phytyltransferase (307 aa).

8 helical membrane passes run 27–47 (MYTV…GLTG), 51–71 (GDVF…INLS), 98–118 (LVFL…MSMS), 125–145 (TVLE…GPPF), 147–167 (LGYL…LAIA), 177–197 (FSWN…IILF), 223–243 (LGSQ…AIGV), and 284–304 (FIAV…YGWA).

The protein belongs to the MenA family. Type 2 subfamily.

Its subcellular location is the cell inner membrane. The enzyme catalyses 2-carboxy-1,4-naphthoquinone + phytyl diphosphate + H(+) = demethylphylloquinone + CO2 + diphosphate. It functions in the pathway cofactor biosynthesis; phylloquinone biosynthesis. In terms of biological role, involved in the synthesis of phylloquinone (vitamin K1). Catalyzes the transfer of a prenyl chain to 2-carboxy-1,4-naphthoquinone. This chain is 2-carboxy-1,4-naphthoquinone phytyltransferase, found in Synechocystis sp. (strain ATCC 27184 / PCC 6803 / Kazusa).